The following is a 921-amino-acid chain: Translation initiation factor IF-2 (921 aa).

The segment at 1-296 (MADNNTPGDK…PGPQKQRGRL (296 aa)) is disordered. The span at 80 to 89 (RPSGPRPGSS) shows a compositional bias: low complexity. The segment covering 116 to 182 (ARVRDMEERR…AKKRFGEGEA (67 aa)) has biased composition (basic and acidic residues). A compositionally biased stretch (low complexity) spans 183-257 (PRPATAAPQQ…LGRAPGVAAG (75 aa)). The tr-type G domain maps to 417 to 586 (PRSPVVTVMG…MIALQADILD (170 aa)). Residues 426–433 (GHVDHGKT) are G1. Position 426-433 (426-433 (GHVDHGKT)) interacts with GTP. Positions 451–455 (GITQH) are G2. Residues 474-477 (DTPG) form a G3 region. GTP-binding positions include 474–478 (DTPGH) and 528–531 (NKID). A G4 region spans residues 528–531 (NKID). The G5 stretch occupies residues 564–566 (SAK).

This sequence belongs to the TRAFAC class translation factor GTPase superfamily. Classic translation factor GTPase family. IF-2 subfamily.

The protein localises to the cytoplasm. In terms of biological role, one of the essential components for the initiation of protein synthesis. Protects formylmethionyl-tRNA from spontaneous hydrolysis and promotes its binding to the 30S ribosomal subunits. Also involved in the hydrolysis of GTP during the formation of the 70S ribosomal complex. The chain is Translation initiation factor IF-2 from Bradyrhizobium sp. (strain BTAi1 / ATCC BAA-1182).